Here is a 418-residue protein sequence, read N- to C-terminus: Tyrosine--tRNA ligase (418 aa).

Tyr-34 contributes to the L-tyrosine binding site. Positions 39 to 48 match the 'HIGH' region motif; sequence PTADSLHLGH. Positions 169 and 173 each coordinate L-tyrosine. The 'KMSKS' region motif lies at 229 to 233; the sequence is KFGKS. Lys-232 lines the ATP pocket. Residues 352-418 form the S4 RNA-binding domain; the sequence is LNLVDMLVTA…GKKKYAVLTY (67 aa).

The protein belongs to the class-I aminoacyl-tRNA synthetase family. TyrS type 1 subfamily. Homodimer.

Its subcellular location is the cytoplasm. The enzyme catalyses tRNA(Tyr) + L-tyrosine + ATP = L-tyrosyl-tRNA(Tyr) + AMP + diphosphate + H(+). In terms of biological role, catalyzes the attachment of tyrosine to tRNA(Tyr) in a two-step reaction: tyrosine is first activated by ATP to form Tyr-AMP and then transferred to the acceptor end of tRNA(Tyr). The protein is Tyrosine--tRNA ligase of Streptococcus pyogenes serotype M18 (strain MGAS8232).